Reading from the N-terminus, the 82-residue chain is Small ribosomal subunit protein bS16c (82 aa).

Belongs to the bacterial ribosomal protein bS16 family.

The protein localises to the plastid. It localises to the chloroplast. The polypeptide is Small ribosomal subunit protein bS16c (Pyropia yezoensis (Susabi-nori)).